Here is a 231-residue protein sequence, read N- to C-terminus: Large ribosomal subunit protein uL1 (231 aa).

It belongs to the universal ribosomal protein uL1 family. Part of the 50S ribosomal subunit.

Its function is as follows. Binds directly to 23S rRNA. The L1 stalk is quite mobile in the ribosome, and is involved in E site tRNA release. Functionally, protein L1 is also a translational repressor protein, it controls the translation of the L11 operon by binding to its mRNA. In Pseudomonas entomophila (strain L48), this protein is Large ribosomal subunit protein uL1.